The chain runs to 401 residues: Multidrug resistance protein MdtH (401 aa).

11 helical membrane passes run 13–33 (YFLI…FPLI), 34–54 (SIHF…ALGL), 88–108 (IGFI…ACIL), 139–159 (ILML…SWLL), 164–184 (FQLV…FNAW), 211–231 (FIIY…VMLM), 248–268 (YIYI…TYWM), 275–295 (ETRL…IGSV), 298–318 (LYEL…AEPA), 341–361 (LSLA…YDLG), and 366–386 (FYQL…LILY).

The protein belongs to the major facilitator superfamily. DHA1 family. MdtH (TC 2.A.1.2.21) subfamily.

The protein resides in the cell inner membrane. The sequence is that of Multidrug resistance protein MdtH from Blochmanniella floridana.